The sequence spans 246 residues: Putative outer membrane protein YiaT (246 aa).

The first 21 residues, 1 to 21 (MLINRNIVALFALPFMASATA), serve as a signal peptide directing secretion.

The protein belongs to the MipA/OmpV family.

The protein localises to the cell outer membrane. This Escherichia coli (strain K12) protein is Putative outer membrane protein YiaT (yiaT).